We begin with the raw amino-acid sequence, 431 residues long: Citrate synthase (431 aa).

Catalysis depends on residues His-306 and Asp-364.

The protein belongs to the citrate synthase family.

The catalysed reaction is oxaloacetate + acetyl-CoA + H2O = citrate + CoA + H(+). The protein operates within carbohydrate metabolism; tricarboxylic acid cycle; isocitrate from oxaloacetate: step 1/2. The protein is Citrate synthase (gltA) of Bartonella henselae (strain ATCC 49882 / DSM 28221 / CCUG 30454 / Houston 1) (Rochalimaea henselae).